The primary structure comprises 241 residues: NAD-dependent protein deacylase (241 aa).

The Deacetylase sirtuin-type domain maps to 1–237 (MNFPYRNIVV…PKLVDEILAL (237 aa)). 13–32 (GAGISAESGIQTFRAQDGLW) lines the NAD(+) pocket. Residues Tyr-57 and Arg-60 each contribute to the substrate site. An NAD(+)-binding site is contributed by 94 to 97 (QNID). His-112 serves as the catalytic Proton acceptor. Residues Cys-120 and Cys-139 each coordinate Zn(2+). NAD(+)-binding positions include 179 to 181 (GTS), 205 to 207 (NLE), and Ala-223.

This sequence belongs to the sirtuin family. Class III subfamily. Monomer. The cofactor is Zn(2+).

It is found in the cytoplasm. It localises to the host cytoplasm. Its subcellular location is the host cytosol. The protein localises to the host nucleus. It carries out the reaction N(6)-acetyl-L-lysyl-[protein] + NAD(+) + H2O = 2''-O-acetyl-ADP-D-ribose + nicotinamide + L-lysyl-[protein]. It catalyses the reaction N(6)-succinyl-L-lysyl-[protein] + NAD(+) + H2O = 2''-O-succinyl-ADP-D-ribose + nicotinamide + L-lysyl-[protein]. Functionally, NAD-dependent lysine deacetylase and desuccinylase that specifically removes acetyl and succinyl groups on target proteins. Modulates the activities of several proteins which are inactive in their acylated form. In the intracellular pathogen V.parahaemolyticus, this enzyme regulates host response during infection by induction of host histone deacetylation; it specifically causes deacetylation of histone lysine residues H3K56, H3K9, H3K18 and H4K16 which results in transcriptional repression of several host genes involved in epigenetic regulation, immune response, and autophagy. The polypeptide is NAD-dependent protein deacylase (Vibrio parahaemolyticus serotype O3:K6 (strain RIMD 2210633)).